Here is a 380-residue protein sequence, read N- to C-terminus: 1-deoxy-D-xylulose 5-phosphate reductoisomerase (380 aa).

The NADPH site is built by S10, G11, S12, I13, G36, K37, N38, and N120. A 1-deoxy-D-xylulose 5-phosphate-binding site is contributed by K121. E122 is an NADPH binding site. Residue D146 participates in Mn(2+) binding. S147, E148, S172, and H195 together coordinate 1-deoxy-D-xylulose 5-phosphate. Position 148 (E148) interacts with Mn(2+). G201 contacts NADPH. Residues S208, N213, K214, and E217 each contribute to the 1-deoxy-D-xylulose 5-phosphate site. Residue E217 participates in Mn(2+) binding.

It belongs to the DXR family. Requires Mg(2+) as cofactor. It depends on Mn(2+) as a cofactor.

The catalysed reaction is 2-C-methyl-D-erythritol 4-phosphate + NADP(+) = 1-deoxy-D-xylulose 5-phosphate + NADPH + H(+). Its pathway is isoprenoid biosynthesis; isopentenyl diphosphate biosynthesis via DXP pathway; isopentenyl diphosphate from 1-deoxy-D-xylulose 5-phosphate: step 1/6. Functionally, catalyzes the NADPH-dependent rearrangement and reduction of 1-deoxy-D-xylulose-5-phosphate (DXP) to 2-C-methyl-D-erythritol 4-phosphate (MEP). In Bacillus cereus (strain ATCC 10987 / NRS 248), this protein is 1-deoxy-D-xylulose 5-phosphate reductoisomerase.